Consider the following 672-residue polypeptide: DNA-directed RNA polymerase subunit gamma (672 aa).

Zn(2+) is bound by residues C70, C72, C85, and C88. Residues D466, D468, and D470 each contribute to the Mg(2+) site.

Belongs to the RNA polymerase beta' chain family. RpoC1 subfamily. In cyanobacteria the RNAP catalytic core is composed of 2 alpha, 1 beta, 1 beta', 1 gamma and 1 omega subunit. When a sigma factor is associated with the core the holoenzyme is formed, which can initiate transcription. Mg(2+) is required as a cofactor. It depends on Zn(2+) as a cofactor.

It catalyses the reaction RNA(n) + a ribonucleoside 5'-triphosphate = RNA(n+1) + diphosphate. Its function is as follows. DNA-dependent RNA polymerase catalyzes the transcription of DNA into RNA using the four ribonucleoside triphosphates as substrates. The protein is DNA-directed RNA polymerase subunit gamma of Trichodesmium erythraeum (strain IMS101).